We begin with the raw amino-acid sequence, 369 residues long: MKSGRFIGVMSGTSLDGVDVVLATIDEHRVAQLASLSWPIPVSLKQAVLDICQGQQLTLSQFGQLDTQLGRLFADAVNALLKEQNLQARDIVAIGCHGQTVWHEPTGVAPHTLQIGDNNQIVARTGITVVGDFRRRDIALGGQGAPLVPAFHHALLAHPTERRMVLNIGGIANLSLLITGQPVGGYDTGPGNMLMDAWIWRQAGKPYDKDAEWARAGKVILPLLQNMLCDPYFSQPAPKSTGREYFNYGWLERHLRHFPGGDPRDVQATLAELTAVTISEQVLLSGGCERLMVCGGGSRNPLLMARLAALLPGTEVTTTDAVGISGDDMEALAFAWLAWRTLAGLPGNLPSVTGASQETVLGAIFPANP.

ATP is bound at residue Gly12–Asp19.

It belongs to the anhydro-N-acetylmuramic acid kinase family.

It catalyses the reaction 1,6-anhydro-N-acetyl-beta-muramate + ATP + H2O = N-acetyl-D-muramate 6-phosphate + ADP + H(+). Its pathway is amino-sugar metabolism; 1,6-anhydro-N-acetylmuramate degradation. The protein operates within cell wall biogenesis; peptidoglycan recycling. Catalyzes the specific phosphorylation of 1,6-anhydro-N-acetylmuramic acid (anhMurNAc) with the simultaneous cleavage of the 1,6-anhydro ring, generating MurNAc-6-P. Is required for the utilization of anhMurNAc either imported from the medium or derived from its own cell wall murein, and thus plays a role in cell wall recycling. The polypeptide is Anhydro-N-acetylmuramic acid kinase (Escherichia coli O6:K15:H31 (strain 536 / UPEC)).